The following is a 316-amino-acid chain: Glutathione synthetase (316 aa).

Positions 125 to 310 (KLFTAWFSDL…ITGMLMDAIE (186 aa)) constitute an ATP-grasp domain. 151 to 207 (WEKHSDIILKPLDGMGGASIFRVKEGDPNLGVIAETLTEHGTRYCMAQNYLPAIKDG) is a binding site for ATP. Mg(2+) is bound by residues glutamate 281 and asparagine 283.

It belongs to the prokaryotic GSH synthase family. Requires Mg(2+) as cofactor. Mn(2+) serves as cofactor.

The catalysed reaction is gamma-L-glutamyl-L-cysteine + glycine + ATP = glutathione + ADP + phosphate + H(+). The protein operates within sulfur metabolism; glutathione biosynthesis; glutathione from L-cysteine and L-glutamate: step 2/2. The sequence is that of Glutathione synthetase from Escherichia coli O6:H1 (strain CFT073 / ATCC 700928 / UPEC).